The chain runs to 270 residues: Orotidine 5'-phosphate decarboxylase (270 aa).

Residues D39, 61–63, 93–102, Y221, and R239 each bind substrate; these read KTH and DRKFADIGNT. The active-site Proton donor is K95.

Belongs to the OMP decarboxylase family.

The catalysed reaction is orotidine 5'-phosphate + H(+) = UMP + CO2. The protein operates within pyrimidine metabolism; UMP biosynthesis via de novo pathway; UMP from orotate: step 2/2. This is Orotidine 5'-phosphate decarboxylase (URA3) from Candida albicans (strain SC5314 / ATCC MYA-2876) (Yeast).